A 419-amino-acid chain; its full sequence is Serine--tRNA ligase (419 aa).

226–228 (TSE) provides a ligand contact to L-serine. ATP is bound by residues 257–259 (RRE) and valine 273. Residue glutamate 280 participates in L-serine binding. 344-347 (ELTS) provides a ligand contact to ATP. Threonine 379 contributes to the L-serine binding site.

Belongs to the class-II aminoacyl-tRNA synthetase family. Type-1 seryl-tRNA synthetase subfamily. Homodimer. The tRNA molecule binds across the dimer.

It localises to the cytoplasm. The enzyme catalyses tRNA(Ser) + L-serine + ATP = L-seryl-tRNA(Ser) + AMP + diphosphate + H(+). The catalysed reaction is tRNA(Sec) + L-serine + ATP = L-seryl-tRNA(Sec) + AMP + diphosphate + H(+). The protein operates within aminoacyl-tRNA biosynthesis; selenocysteinyl-tRNA(Sec) biosynthesis; L-seryl-tRNA(Sec) from L-serine and tRNA(Sec): step 1/1. Functionally, catalyzes the attachment of serine to tRNA(Ser). Is also able to aminoacylate tRNA(Sec) with serine, to form the misacylated tRNA L-seryl-tRNA(Sec), which will be further converted into selenocysteinyl-tRNA(Sec). The polypeptide is Serine--tRNA ligase (Corynebacterium diphtheriae (strain ATCC 700971 / NCTC 13129 / Biotype gravis)).